Reading from the N-terminus, the 364-residue chain is Fructose-bisphosphate aldolase B (364 aa).

Substrate-binding residues include R56 and K147. E188 acts as the Proton acceptor in catalysis. Residue K230 is the Schiff-base intermediate with dihydroxyacetone-P of the active site.

It belongs to the class I fructose-bisphosphate aldolase family. As to quaternary structure, homotetramer.

The protein localises to the cytoplasm. It localises to the cytoskeleton. Its subcellular location is the microtubule organizing center. The protein resides in the centrosome. It is found in the centriolar satellite. The enzyme catalyses beta-D-fructose 1,6-bisphosphate = D-glyceraldehyde 3-phosphate + dihydroxyacetone phosphate. It functions in the pathway carbohydrate degradation; glycolysis; D-glyceraldehyde 3-phosphate and glycerone phosphate from D-glucose: step 4/4. The sequence is that of Fructose-bisphosphate aldolase B (aldob) from Sparus aurata (Gilthead sea bream).